The primary structure comprises 160 residues: uncharacterized protein (160 aa).

It belongs to the Dps family.

This is an uncharacterized protein from Haemophilus influenzae (strain ATCC 51907 / DSM 11121 / KW20 / Rd).